The chain runs to 414 residues: Gamma-glutamyl phosphate reductase (414 aa).

This sequence belongs to the gamma-glutamyl phosphate reductase family.

The protein resides in the cytoplasm. The enzyme catalyses L-glutamate 5-semialdehyde + phosphate + NADP(+) = L-glutamyl 5-phosphate + NADPH + H(+). It functions in the pathway amino-acid biosynthesis; L-proline biosynthesis; L-glutamate 5-semialdehyde from L-glutamate: step 2/2. Functionally, catalyzes the NADPH-dependent reduction of L-glutamate 5-phosphate into L-glutamate 5-semialdehyde and phosphate. The product spontaneously undergoes cyclization to form 1-pyrroline-5-carboxylate. The sequence is that of Gamma-glutamyl phosphate reductase from Clostridium botulinum (strain Eklund 17B / Type B).